The primary structure comprises 197 residues: UPF0200 protein MJ1399 (197 aa).

Residue 8–15 coordinates ATP; the sequence is GMPGAGKS.

The protein belongs to the UPF0200 family.

This chain is UPF0200 protein MJ1399, found in Methanocaldococcus jannaschii (strain ATCC 43067 / DSM 2661 / JAL-1 / JCM 10045 / NBRC 100440) (Methanococcus jannaschii).